We begin with the raw amino-acid sequence, 271 residues long: 5-deoxy-glucuronate isomerase (271 aa).

The protein belongs to the isomerase IolB family.

It carries out the reaction 5-deoxy-D-glucuronate = 5-dehydro-2-deoxy-D-gluconate. It functions in the pathway polyol metabolism; myo-inositol degradation into acetyl-CoA; acetyl-CoA from myo-inositol: step 4/7. Functionally, involved in the isomerization of 5-deoxy-glucuronate (5DG) to 5-dehydro-2-deoxy-D-gluconate (DKG or 2-deoxy-5-keto-D-gluconate). This Lacticaseibacillus casei (Lactobacillus casei) protein is 5-deoxy-glucuronate isomerase.